The sequence spans 332 residues: Ribosomal RNA small subunit methyltransferase C (332 aa).

Belongs to the methyltransferase superfamily. RsmC family. As to quaternary structure, monomer.

The protein resides in the cytoplasm. It carries out the reaction guanosine(1207) in 16S rRNA + S-adenosyl-L-methionine = N(2)-methylguanosine(1207) in 16S rRNA + S-adenosyl-L-homocysteine + H(+). Specifically methylates the guanine in position 1207 of 16S rRNA in the 30S particle. The polypeptide is Ribosomal RNA small subunit methyltransferase C (Pseudomonas fluorescens (strain ATCC BAA-477 / NRRL B-23932 / Pf-5)).